Consider the following 452-residue polypeptide: Exodeoxyribonuclease 7 large subunit (452 aa).

The protein belongs to the XseA family. In terms of assembly, heterooligomer composed of large and small subunits.

The protein resides in the cytoplasm. The enzyme catalyses Exonucleolytic cleavage in either 5'- to 3'- or 3'- to 5'-direction to yield nucleoside 5'-phosphates.. Its function is as follows. Bidirectionally degrades single-stranded DNA into large acid-insoluble oligonucleotides, which are then degraded further into small acid-soluble oligonucleotides. This chain is Exodeoxyribonuclease 7 large subunit, found in Bacillus mycoides (strain KBAB4) (Bacillus weihenstephanensis).